The chain runs to 159 residues: Succinate dehydrogenase [ubiquinone] cytochrome b small subunit, mitochondrial (159 aa).

The transit peptide at Met-1 to Gln-56 directs the protein to the mitochondrion. Residues Ser-57–Ser-63 lie on the Mitochondrial matrix side of the membrane. A helical transmembrane segment spans residues Leu-64–Leu-85. Residues Asn-86–Val-90 lie on the Mitochondrial intermembrane side of the membrane. Residues Val-91–Val-111 form a helical membrane-spanning segment. Residue His-102 participates in heme b binding. Residues Thr-112–Leu-120 lie on the Mitochondrial matrix side of the membrane. Tyr-114 contributes to the a ubiquinone binding site. A helical membrane pass occupies residues Gln-121–Phe-142. The Mitochondrial intermembrane portion of the chain corresponds to Asn-143–Leu-159.

This sequence belongs to the CybS family. As to quaternary structure, component of complex II composed of four subunits: the flavoprotein (FP) SDHA, iron-sulfur protein (IP) SDHB, and a cytochrome b560 composed of SDHC and SDHD.

Its subcellular location is the mitochondrion inner membrane. Its pathway is carbohydrate metabolism; tricarboxylic acid cycle. In terms of biological role, membrane-anchoring subunit of succinate dehydrogenase (SDH) that is involved in complex II of the mitochondrial electron transport chain and is responsible for transferring electrons from succinate to ubiquinone (coenzyme Q). SDH also oxidizes malate to the non-canonical enol form of oxaloacetate, enol-oxaloacetate. Enol-oxaloacetate, which is a potent inhibitor of the succinate dehydrogenase activity, is further isomerized into keto-oxaloacetate. This Rattus norvegicus (Rat) protein is Succinate dehydrogenase [ubiquinone] cytochrome b small subunit, mitochondrial (Sdhd).